The primary structure comprises 465 residues: Cysteine--tRNA ligase (465 aa).

Position 29 (Cys29) interacts with Zn(2+). Positions 31–41 match the 'HIGH' region motif; sequence ITPYDEVHLGH. Positions 212, 237, and 241 each coordinate Zn(2+). The 'KMSKS' region signature appears at 269 to 273; the sequence is KMSKS. Lys272 lines the ATP pocket.

Belongs to the class-I aminoacyl-tRNA synthetase family. As to quaternary structure, monomer. It depends on Zn(2+) as a cofactor.

It is found in the cytoplasm. It catalyses the reaction tRNA(Cys) + L-cysteine + ATP = L-cysteinyl-tRNA(Cys) + AMP + diphosphate. This Endomicrobium trichonymphae protein is Cysteine--tRNA ligase.